The chain runs to 440 residues: tRNA-2-methylthio-N(6)-dimethylallyladenosine synthase (440 aa).

Positions 4-120 (NYVYIETFGC…LNDMVLAAER (117 aa)) constitute an MTTase N-terminal domain. [4Fe-4S] cluster contacts are provided by Cys13, Cys49, Cys83, Cys158, Cys162, and Cys165. Residues 144–374 (GTARISSFVT…QALQKRTTME (231 aa)) enclose the Radical SAM core domain. A TRAM domain is found at 377–439 (DVLLGTRQTV…QNSLLGELLP (63 aa)).

The protein belongs to the methylthiotransferase family. MiaB subfamily. In terms of assembly, monomer. [4Fe-4S] cluster serves as cofactor.

Its subcellular location is the cytoplasm. It catalyses the reaction N(6)-dimethylallyladenosine(37) in tRNA + (sulfur carrier)-SH + AH2 + 2 S-adenosyl-L-methionine = 2-methylsulfanyl-N(6)-dimethylallyladenosine(37) in tRNA + (sulfur carrier)-H + 5'-deoxyadenosine + L-methionine + A + S-adenosyl-L-homocysteine + 2 H(+). In terms of biological role, catalyzes the methylthiolation of N6-(dimethylallyl)adenosine (i(6)A), leading to the formation of 2-methylthio-N6-(dimethylallyl)adenosine (ms(2)i(6)A) at position 37 in tRNAs that read codons beginning with uridine. The protein is tRNA-2-methylthio-N(6)-dimethylallyladenosine synthase of Pelobacter propionicus (strain DSM 2379 / NBRC 103807 / OttBd1).